Reading from the N-terminus, the 107-residue chain is Glutaredoxin 4 (107 aa).

The Glutaredoxin domain maps to 4–106 (IEKIERQIKD…KIISNAVLNS (103 aa)). Lys21 lines the glutathione pocket. A [2Fe-2S] cluster-binding site is contributed by Cys29. Glutathione contacts are provided by residues Arg58, Phe70, and 83–84 (CS).

This sequence belongs to the glutaredoxin family. Monothiol subfamily. In terms of assembly, homodimer.

It localises to the cytoplasm. Its function is as follows. Monothiol glutaredoxin involved in the biogenesis of iron-sulfur clusters. This chain is Glutaredoxin 4 (grxD), found in Buchnera aphidicola subsp. Schizaphis graminum (strain Sg).